The primary structure comprises 423 residues: G-protein coupled receptor 83 (423 aa).

The first 16 residues, 1–16, serve as a signal peptide directing secretion; that stretch reads MVPHLLLLCLLPLVRA. Topologically, residues 18–71 are extracellular; it reads EPHEGRADEQSAEAALAVPNASHFFSWNNYTFSDWQNFVGRRRYGAESQNPTVK. N-linked (GlcNAc...) asparagine glycans are attached at residues Asn37 and Asn46. Residues 72 to 92 traverse the membrane as a helical segment; that stretch reads ALLIVAYSFIIVFSLFGNVLV. The Cytoplasmic segment spans residues 93–107; that stretch reads CHVIFKNQRMHSATS. A helical transmembrane segment spans residues 108–129; sequence LFIVNLAVADIMITLLNTPFTL. At 130-145 the chain is on the extracellular side; it reads VRFVNSTWIFGKGMCH. N-linked (GlcNAc...) asparagine glycosylation is present at Asn134. A disulfide bridge connects residues Cys144 and Cys224. The chain crosses the membrane as a helical span at residues 146–167; that stretch reads VSRFAQYCSLHVSALTLTAIAV. The Cytoplasmic portion of the chain corresponds to 168–186; sequence DRHQVIMHPLKPRISITKG. The chain crosses the membrane as a helical span at residues 187-208; sequence VIYIAVIWTMATFFSLPHAICQ. At 209–238 the chain is on the extracellular side; sequence KLFTFKYSEDIVRSLCLPDFPEPADLFWKY. The helical transmembrane segment at 239 to 260 threads the bilayer; it reads LDLATFILLYILPLLIISVAYA. Over 261-293 the chain is Cytoplasmic; it reads RVAKKLWLCNMIGDVTTEQYFALRRKKKKTIKM. A helical transmembrane segment spans residues 294–315; that stretch reads LMLVVVLFALCWFPLNCYVLLL. The Extracellular segment spans residues 316 to 327; that stretch reads SSKVIRTNNALY. A helical membrane pass occupies residues 328 to 348; sequence FAFHWFAMSSTCYNPFIYCWL. Residues 349-423 lie on the Cytoplasmic side of the membrane; it reads NENFRIELKA…SSVEPIVTMS (75 aa). The span at 402–414 shows a compositional bias: polar residues; sequence PTSQLQSGKTDLS. Residues 402–423 are disordered; that stretch reads PTSQLQSGKTDLSSVEPIVTMS.

It belongs to the G-protein coupled receptor 1 family. Highly expressed in the brain and spinal cord, and found in lower concentrations in the thymus and other tissues.

It is found in the cell membrane. G-protein coupled receptor for PEN, a neuropeptide produced from the precursor protein, proSAAS (encoded by PCSK1N). Acts through a G(i)- and G(q)-alpha-alpha-mediated pathway in response to PEN. Plays a role in food intake and body weight regulation. May contribute to the regulation of anxiety-related behaviors. This is G-protein coupled receptor 83 from Homo sapiens (Human).